We begin with the raw amino-acid sequence, 518 residues long: Xylose import ATP-binding protein XylG (518 aa).

ABC transporter domains lie at 6 to 245 and 262 to 507; these read LQMN…VGRE and FEAR…LSHP. 38-45 lines the ATP pocket; it reads GENGTGKS.

This sequence belongs to the ABC transporter superfamily. Xylose importer (TC 3.A.1.2.4) family. In terms of assembly, the complex is composed of two ATP-binding proteins (XylG), two transmembrane proteins (XylH) and a solute-binding protein (XylF).

Its subcellular location is the cell inner membrane. It carries out the reaction D-xylose(out) + ATP + H2O = D-xylose(in) + ADP + phosphate + H(+). In terms of biological role, part of the ABC transporter complex XylFGH involved in xylose import. Responsible for energy coupling to the transport system. This Pseudomonas savastanoi pv. phaseolicola (strain 1448A / Race 6) (Pseudomonas syringae pv. phaseolicola (strain 1448A / Race 6)) protein is Xylose import ATP-binding protein XylG.